The chain runs to 178 residues: CDP-archaeol synthase (178 aa).

4 helical membrane-spanning segments follow: residues 3–23 (LLLL…ANAV), 56–76 (FFGI…VILY), 91–111 (IILS…GSFI), and 136–156 (LLFA…LLVI).

The protein belongs to the CDP-archaeol synthase family. It depends on Mg(2+) as a cofactor.

The protein resides in the cell membrane. It catalyses the reaction 2,3-bis-O-(geranylgeranyl)-sn-glycerol 1-phosphate + CTP + H(+) = CDP-2,3-bis-O-(geranylgeranyl)-sn-glycerol + diphosphate. The protein operates within membrane lipid metabolism; glycerophospholipid metabolism. In terms of biological role, catalyzes the formation of CDP-2,3-bis-(O-geranylgeranyl)-sn-glycerol (CDP-archaeol) from 2,3-bis-(O-geranylgeranyl)-sn-glycerol 1-phosphate (DGGGP) and CTP. This reaction is the third ether-bond-formation step in the biosynthesis of archaeal membrane lipids. The protein is CDP-archaeol synthase of Methanococcus maripaludis (strain C5 / ATCC BAA-1333).